The following is a 112-amino-acid chain: Nitrogenase-stabilizing/protective protein NifW (112 aa).

This sequence belongs to the NifW family. As to quaternary structure, homotrimer; associates with NifD.

May protect the nitrogenase Fe-Mo protein from oxidative damage. The polypeptide is Nitrogenase-stabilizing/protective protein NifW (Rhodopseudomonas palustris (strain BisA53)).